Here is a 632-residue protein sequence, read N- to C-terminus: tRNA uridine 5-carboxymethylaminomethyl modification enzyme MnmG (632 aa).

FAD is bound by residues 15–20 (GAGHAG), V127, and S182. The tract at residues 203–226 (TPPRVKSSTIDYSKTEEQPGDDHP) is disordered. Residues 215–226 (SKTEEQPGDDHP) show a composition bias toward basic and acidic residues. 274–288 (GARYCPSIEDKIVRF) contacts NAD(+). Q371 serves as a coordination point for FAD.

It belongs to the MnmG family. In terms of assembly, homodimer. Heterotetramer of two MnmE and two MnmG subunits. FAD is required as a cofactor.

The protein resides in the cytoplasm. In terms of biological role, NAD-binding protein involved in the addition of a carboxymethylaminomethyl (cmnm) group at the wobble position (U34) of certain tRNAs, forming tRNA-cmnm(5)s(2)U34. The chain is tRNA uridine 5-carboxymethylaminomethyl modification enzyme MnmG from Listeria monocytogenes serotype 4b (strain F2365).